The primary structure comprises 376 residues: Actin-related protein T1 (376 aa).

Belongs to the actin family. In terms of tissue distribution, in skin, expressed in the basal, spinous and granular layers of the epidermis. Also expressed in hair follicles, sebaceaous glands, eccrine sweat glands and semen.

Its subcellular location is the cytoplasm. The protein resides in the cytoskeleton. The protein localises to the nucleus. It localises to the cytoplasmic vesicle. It is found in the secretory vesicle. Its subcellular location is the acrosome. Functionally, negatively regulates the Hedgehog (SHH) signaling. Binds to the promoter of the SHH signaling mediator, GLI1, and inhibits its expression. This chain is Actin-related protein T1, found in Homo sapiens (Human).